We begin with the raw amino-acid sequence, 754 residues long: Phosphatidylinositol 4-phosphate 5-kinase 7 (754 aa).

MORN repeat units lie at residues 16–38, 39–61, 62–84, 85–107, 108–130, 131–153, 154–176, and 177–198; these read YSGE…DGTI, YEGD…SGAK, YEGD…DESV, YSGA…NSDL, YDGL…NGNR, YIGN…NGDL, YDGF…DGCL, and YYGT…AGTK. Residues 329–750 enclose the PIPK domain; the sequence is GEHNYYLMLN…RFVNFLHKVF (422 aa). Residues 710 to 731 are activation loop; that stretch reads YNTKKKVEHTCKSLQYDPMTIS.

It carries out the reaction a 1,2-diacyl-sn-glycero-3-phospho-(1D-myo-inositol 4-phosphate) + ATP = a 1,2-diacyl-sn-glycero-3-phospho-(1D-myo-inositol-4,5-bisphosphate) + ADP + H(+). This chain is Phosphatidylinositol 4-phosphate 5-kinase 7 (PIP5K7), found in Arabidopsis thaliana (Mouse-ear cress).